We begin with the raw amino-acid sequence, 260 residues long: HTH-type transcriptional repressor NanR (260 aa).

Residues 1–20 (MNPFDSQSEDASDAIGRSLG) form a disordered region. The HTH gntR-type domain maps to 27–95 (KKLSEMVEEE…NGERARVSRP (69 aa)). Residues 55-74 (ERELMAFFNVGRPSVREALA) constitute a DNA-binding region (H-T-H motif).

It belongs to the NanR family.

In terms of biological role, transcriptional repressor that controls expression of the genes required for the catabolism of sialic acids. This Cronobacter sakazakii (strain ATCC BAA-894) (Enterobacter sakazakii) protein is HTH-type transcriptional repressor NanR.